We begin with the raw amino-acid sequence, 174 residues long: Inactive protein RESTRICTED TEV MOVEMENT 1 (174 aa).

Residues 1–152 enclose the Jacalin-type lectin domain; it reads MKIGPVGKHD…LQYIGVYLRP (152 aa).

This sequence belongs to the jacalin lectin family. In terms of assembly, self-interacts. Interacts with RTM3.

Its subcellular location is the cytoplasm. Its function is as follows. Unable to mediate restriction of long-distance movement of the pathogenic tobacco etch virus (TEV) without causing a hypersensitive response or inducing systemic acquired resistance. The chain is Inactive protein RESTRICTED TEV MOVEMENT 1 (RTM1) from Arabidopsis thaliana (Mouse-ear cress).